The chain runs to 441 residues: Arginine biosynthesis bifunctional protein ArgJ, mitochondrial (441 aa).

The substrate site is built by Thr177, Lys203, Thr214, Glu303, Asn436, and Ser441. Thr214 (nucleophile) is an active-site residue.

The protein belongs to the ArgJ family. Heterodimer of an alpha and a beta chain. In terms of processing, the alpha and beta chains are autoproteolytically processed from a single precursor protein within the mitochondrion.

It localises to the mitochondrion matrix. The enzyme catalyses N(2)-acetyl-L-ornithine + L-glutamate = N-acetyl-L-glutamate + L-ornithine. It carries out the reaction L-glutamate + acetyl-CoA = N-acetyl-L-glutamate + CoA + H(+). The protein operates within amino-acid biosynthesis; L-arginine biosynthesis; L-ornithine and N-acetyl-L-glutamate from L-glutamate and N(2)-acetyl-L-ornithine (cyclic): step 1/1. Its pathway is amino-acid biosynthesis; L-arginine biosynthesis; N(2)-acetyl-L-ornithine from L-glutamate: step 1/4. Its function is as follows. Catalyzes two activities which are involved in the cyclic version of arginine biosynthesis: the synthesis of acetylglutamate from glutamate and acetyl-CoA, and of ornithine by transacetylation between acetylornithine and glutamate. This is Arginine biosynthesis bifunctional protein ArgJ, mitochondrial from Debaryomyces hansenii (strain ATCC 36239 / CBS 767 / BCRC 21394 / JCM 1990 / NBRC 0083 / IGC 2968) (Yeast).